The following is a 164-amino-acid chain: Peptidyl-prolyl cis-trans isomerase A-like 4C (164 aa).

The PPIase cyclophilin-type domain maps to 7-163; that stretch reads FFDITVDGKP…KKITIADCGQ (157 aa).

This sequence belongs to the cyclophilin-type PPIase family. PPIase A subfamily.

It localises to the cytoplasm. It catalyses the reaction [protein]-peptidylproline (omega=180) = [protein]-peptidylproline (omega=0). Its function is as follows. PPIases accelerate the folding of proteins. It catalyzes the cis-trans isomerization of proline imidic peptide bonds in oligopeptides. This is Peptidyl-prolyl cis-trans isomerase A-like 4C from Homo sapiens (Human).